Reading from the N-terminus, the 464-residue chain is 3-isopropylmalate dehydratase large subunit (464 aa).

[4Fe-4S] cluster is bound by residues C345, C405, and C408.

This sequence belongs to the aconitase/IPM isomerase family. LeuC type 1 subfamily. In terms of assembly, heterodimer of LeuC and LeuD. It depends on [4Fe-4S] cluster as a cofactor.

It catalyses the reaction (2R,3S)-3-isopropylmalate = (2S)-2-isopropylmalate. It functions in the pathway amino-acid biosynthesis; L-leucine biosynthesis; L-leucine from 3-methyl-2-oxobutanoate: step 2/4. Catalyzes the isomerization between 2-isopropylmalate and 3-isopropylmalate, via the formation of 2-isopropylmaleate. In Bacteroides thetaiotaomicron (strain ATCC 29148 / DSM 2079 / JCM 5827 / CCUG 10774 / NCTC 10582 / VPI-5482 / E50), this protein is 3-isopropylmalate dehydratase large subunit.